A 94-amino-acid polypeptide reads, in one-letter code: Neutrophil antibiotic peptide NP-2 (94 aa).

Positions 1-19 (MRTLTLLTALLLLALHTQA) are cleaved as a signal peptide. The propeptide occupies 20-62 (KSPQGTAEEAPDQEQLVMEDQDISISFGGDKGTALQDADVKAG). Intrachain disulfides connect C65–C93, C67–C82, and C72–C92.

Belongs to the alpha-defensin family. As to expression, highest expression in bone marrow and to a much lesser extent in small intestine.

It is found in the secreted. In terms of biological role, active in vitro against S.aureus, fungi, Gram-positive and Gram-negative bacteria and to a lesser extent against an enveloped virus. The chain is Neutrophil antibiotic peptide NP-2 (Defa) from Rattus norvegicus (Rat).